The primary structure comprises 153 residues: ATP synthase subunit b' (153 aa).

A helical transmembrane segment spans residues 23–40; it reads LMAIQVVALTYILNSLFF.

Belongs to the ATPase B chain family. F-type ATPases have 2 components, F(1) - the catalytic core - and F(0) - the membrane proton channel. F(1) has five subunits: alpha(3), beta(3), gamma(1), delta(1), epsilon(1). F(0) has four main subunits: a(1), b(1), b'(1) and c(10-14). The alpha and beta chains form an alternating ring which encloses part of the gamma chain. F(1) is attached to F(0) by a central stalk formed by the gamma and epsilon chains, while a peripheral stalk is formed by the delta, b and b' chains.

The protein localises to the cellular thylakoid membrane. Functionally, f(1)F(0) ATP synthase produces ATP from ADP in the presence of a proton or sodium gradient. F-type ATPases consist of two structural domains, F(1) containing the extramembraneous catalytic core and F(0) containing the membrane proton channel, linked together by a central stalk and a peripheral stalk. During catalysis, ATP synthesis in the catalytic domain of F(1) is coupled via a rotary mechanism of the central stalk subunits to proton translocation. Component of the F(0) channel, it forms part of the peripheral stalk, linking F(1) to F(0). The b'-subunit is a diverged and duplicated form of b found in plants and photosynthetic bacteria. In Prochlorococcus marinus (strain AS9601), this protein is ATP synthase subunit b'.